The chain runs to 1248 residues: ATP-dependent helicase/nuclease subunit A (1248 aa).

Residues 4–480 (TKWTKEQYAA…ILLFKNFRSR (477 aa)) enclose the UvrD-like helicase ATP-binding domain. 25–32 (AAAGAGKT) contacts ATP. The region spanning 523-820 (ETVVGGAIEL…RLMSIHKSKG (298 aa)) is the UvrD-like helicase C-terminal domain.

The protein belongs to the helicase family. AddA subfamily. Heterodimer of AddA and AddB/RexB. Mg(2+) serves as cofactor.

It carries out the reaction Couples ATP hydrolysis with the unwinding of duplex DNA by translocating in the 3'-5' direction.. The enzyme catalyses ATP + H2O = ADP + phosphate + H(+). The heterodimer acts as both an ATP-dependent DNA helicase and an ATP-dependent, dual-direction single-stranded exonuclease. Recognizes the chi site generating a DNA molecule suitable for the initiation of homologous recombination. The AddA nuclease domain is required for chi fragment generation; this subunit has the helicase and 3' -&gt; 5' nuclease activities. This chain is ATP-dependent helicase/nuclease subunit A, found in Ruminiclostridium cellulolyticum (strain ATCC 35319 / DSM 5812 / JCM 6584 / H10) (Clostridium cellulolyticum).